The following is a 319-amino-acid chain: Transaldolase (319 aa).

Lysine 126 (schiff-base intermediate with substrate) is an active-site residue.

The protein belongs to the transaldolase family. Type 1 subfamily. In terms of assembly, homodimer.

It is found in the cytoplasm. The catalysed reaction is D-sedoheptulose 7-phosphate + D-glyceraldehyde 3-phosphate = D-erythrose 4-phosphate + beta-D-fructose 6-phosphate. The protein operates within carbohydrate degradation; pentose phosphate pathway; D-glyceraldehyde 3-phosphate and beta-D-fructose 6-phosphate from D-ribose 5-phosphate and D-xylulose 5-phosphate (non-oxidative stage): step 2/3. Its function is as follows. Transaldolase is important for the balance of metabolites in the pentose-phosphate pathway. The polypeptide is Transaldolase (Bordetella avium (strain 197N)).